The chain runs to 159 residues: Prs ADP-ribosylating antitoxin (159 aa).

A sufficient to neutralize toxin region spans residues 99–159 (EDMVEESGET…LAQIQSGAFA (61 aa)).

The protein belongs to the MbcA/ParS/Xre antitoxin family. In terms of assembly, forms heterotetrameric ParS(2)-ParT(2) complexes. The 2 antitoxin fragments do not make contact in the crystal structure.

In terms of biological role, antitoxin component of a type II toxin-antitoxin (TA) system. Neutralizes the bacteriostatic effect of cognate toxin ParT by inserting into its active site. The sequence is that of Prs ADP-ribosylating antitoxin from Sphingobium sp. (strain YBL2).